Consider the following 165-residue polypeptide: Endoribonuclease YbeY (165 aa).

The Zn(2+) site is built by His-130, His-134, and His-140.

The protein belongs to the endoribonuclease YbeY family. Zn(2+) serves as cofactor.

The protein resides in the cytoplasm. Single strand-specific metallo-endoribonuclease involved in late-stage 70S ribosome quality control and in maturation of the 3' terminus of the 16S rRNA. The chain is Endoribonuclease YbeY from Streptococcus pyogenes serotype M1.